Here is a 138-residue protein sequence, read N- to C-terminus: Transcription antitermination protein NusB (138 aa).

It belongs to the NusB family.

Functionally, involved in transcription antitermination. Required for transcription of ribosomal RNA (rRNA) genes. Binds specifically to the boxA antiterminator sequence of the ribosomal RNA (rrn) operons. The sequence is that of Transcription antitermination protein NusB from Helicobacter pylori (strain G27).